A 413-amino-acid chain; its full sequence is Glucose-1-phosphate adenylyltransferase (413 aa).

Alpha-D-glucose 1-phosphate-binding positions include glycine 169, 184–185, and serine 201; that span reads EK.

The protein belongs to the bacterial/plant glucose-1-phosphate adenylyltransferase family. Homotetramer.

The enzyme catalyses alpha-D-glucose 1-phosphate + ATP + H(+) = ADP-alpha-D-glucose + diphosphate. It participates in glycan biosynthesis; glycogen biosynthesis. Involved in the biosynthesis of ADP-glucose, a building block required for the elongation reactions to produce glycogen. Catalyzes the reaction between ATP and alpha-D-glucose 1-phosphate (G1P) to produce pyrophosphate and ADP-Glc. The sequence is that of Glucose-1-phosphate adenylyltransferase from Trichlorobacter lovleyi (strain ATCC BAA-1151 / DSM 17278 / SZ) (Geobacter lovleyi).